A 178-amino-acid polypeptide reads, in one-letter code: Probable major fimbrial subunit LpfA (178 aa).

Positions 1–24 (MEFFMKKVVFALTALALTSGTVFA) are cleaved as a signal peptide.

It belongs to the fimbrial protein family.

It is found in the fimbrium. Functionally, part of the lpfABCC'DE fimbrial operon. LP fimbriae may participate in the interaction with eukaryotic cells by assisting in microcolony formation. The chain is Probable major fimbrial subunit LpfA (lpfA) from Escherichia coli O157:H7.